We begin with the raw amino-acid sequence, 229 residues long: UPF0319 protein Sbal223_2728 (229 aa).

The N-terminal stretch at Met-1–Ala-21 is a signal peptide.

Belongs to the UPF0319 family.

This is UPF0319 protein Sbal223_2728 from Shewanella baltica (strain OS223).